Here is a 492-residue protein sequence, read N- to C-terminus: Probable glycogen synthase 2 (492 aa).

Residue Lys15 coordinates ADP-alpha-D-glucose.

The protein belongs to the glycosyltransferase 1 family. Bacterial/plant glycogen synthase subfamily.

The enzyme catalyses [(1-&gt;4)-alpha-D-glucosyl](n) + ADP-alpha-D-glucose = [(1-&gt;4)-alpha-D-glucosyl](n+1) + ADP + H(+). Its pathway is glycan biosynthesis; glycogen biosynthesis. Its function is as follows. Synthesizes alpha-1,4-glucan chains using ADP-glucose. The chain is Probable glycogen synthase 2 (glgA2) from Nostoc sp. (strain PCC 7120 / SAG 25.82 / UTEX 2576).